The primary structure comprises 489 residues: Lysine--tRNA ligase (489 aa).

Mg(2+) contacts are provided by glutamate 398 and glutamate 405.

This sequence belongs to the class-II aminoacyl-tRNA synthetase family. Homodimer. Requires Mg(2+) as cofactor.

It is found in the cytoplasm. It carries out the reaction tRNA(Lys) + L-lysine + ATP = L-lysyl-tRNA(Lys) + AMP + diphosphate. The protein is Lysine--tRNA ligase of Moorella thermoacetica (strain ATCC 39073 / JCM 9320).